We begin with the raw amino-acid sequence, 1484 residues long: Ral GTPase-activating protein subunit beta (1484 aa).

2 disordered regions span residues 355-437 and 697-728; these read PRSD…APRR and GGEN…PDSE. Position 359 is a phosphoserine (S359). Phosphothreonine occurs at positions 363 and 379. Polar residues-rich tracts occupy residues 369 to 381, 392 to 428, and 701 to 725; these read SMPQ…TTPP, NKAT…TSSE, and NLKS…PTTP. A phosphoserine mark is found at S421 and S710. T724 carries the phosphothreonine modification. Residues 1138-1382 form the Rap-GAP domain; sequence IGYLDLLPCR…TTLEKEVPVI (245 aa). S1275 is subject to Phosphoserine. The interval 1301 to 1325 is disordered; it reads DSLNSSQRLSPSSRMKKLPQGRPVP. The span at 1302–1313 shows a compositional bias: low complexity; the sequence is SLNSSQRLSPSS.

As to quaternary structure, component of the heterodimeric RalGAP1 complex with RALGAPA1 and of the heterodimeric RalGAP2 complex with RALGAPA2. Heterodimerization is required for activity. Detected in brain, thymus, lung, heart, spleen, liver and testis (at protein level).

Its function is as follows. Non-catalytic subunit of the heterodimeric RalGAP1 and RalGAP2 complexes which act as GTPase activators for the Ras-like small GTPases RALA and RALB. This Rattus norvegicus (Rat) protein is Ral GTPase-activating protein subunit beta.